The primary structure comprises 354 residues: UDP-3-O-acylglucosamine N-acyltransferase (354 aa).

The active-site Proton acceptor is the His250.

The protein belongs to the transferase hexapeptide repeat family. LpxD subfamily. As to quaternary structure, homotrimer.

It carries out the reaction a UDP-3-O-[(3R)-3-hydroxyacyl]-alpha-D-glucosamine + a (3R)-hydroxyacyl-[ACP] = a UDP-2-N,3-O-bis[(3R)-3-hydroxyacyl]-alpha-D-glucosamine + holo-[ACP] + H(+). It participates in bacterial outer membrane biogenesis; LPS lipid A biosynthesis. Its function is as follows. Catalyzes the N-acylation of UDP-3-O-acylglucosamine using 3-hydroxyacyl-ACP as the acyl donor. Is involved in the biosynthesis of lipid A, a phosphorylated glycolipid that anchors the lipopolysaccharide to the outer membrane of the cell. The chain is UDP-3-O-acylglucosamine N-acyltransferase from Methylococcus capsulatus (strain ATCC 33009 / NCIMB 11132 / Bath).